A 100-amino-acid chain; its full sequence is Urease subunit gamma (100 aa).

The protein belongs to the urease gamma subunit family. In terms of assembly, heterotrimer of UreA (gamma), UreB (beta) and UreC (alpha) subunits. Three heterotrimers associate to form the active enzyme.

It localises to the cytoplasm. The enzyme catalyses urea + 2 H2O + H(+) = hydrogencarbonate + 2 NH4(+). The protein operates within nitrogen metabolism; urea degradation; CO(2) and NH(3) from urea (urease route): step 1/1. The polypeptide is Urease subunit gamma (Polynucleobacter asymbioticus (strain DSM 18221 / CIP 109841 / QLW-P1DMWA-1) (Polynucleobacter necessarius subsp. asymbioticus)).